The following is a 401-amino-acid chain: MNISEGTVSVSRLVYLLKEVVEDNFVQVLVTGEIANFSAPSSGHYYFAVKDDQAQLRGVMFRSSNRLLKFTPENGMQVLCGGRVSLYPQRGELQLVVDRMEPLGVGSWQLAFEKLKTKLDAEGLFEVGRKRRLPSFPRTIGVVTSPTGAAIHDILNVLRRRGAGLHVLLSPVRVQGDGAADEIARAIADFNRHGQADVLIVGRGGGSPEDLWAFNEEVVARAVFASRIPVISAVGHEVDVTISDLVADLRAPTPSAAAELVVQGRQELERHVDHLVMRLSGQMQGRLSLLKERLDGLRRRLRSPVDDLRRQYRDLEQLRKRLFSAMEKTMQRAANRLGLAGSRLHALSPLATLDRGYAIVFSAKTSTIVRDARTLTPGDRVQIRFAKGSVEATVDEVDHGD.

The protein belongs to the XseA family. In terms of assembly, heterooligomer composed of large and small subunits.

It localises to the cytoplasm. It catalyses the reaction Exonucleolytic cleavage in either 5'- to 3'- or 3'- to 5'-direction to yield nucleoside 5'-phosphates.. Functionally, bidirectionally degrades single-stranded DNA into large acid-insoluble oligonucleotides, which are then degraded further into small acid-soluble oligonucleotides. The sequence is that of Exodeoxyribonuclease 7 large subunit from Syntrophotalea carbinolica (strain DSM 2380 / NBRC 103641 / GraBd1) (Pelobacter carbinolicus).